A 215-amino-acid chain; its full sequence is Adenylate kinase (215 aa).

Position 10–15 (glycine 10–threonine 15) interacts with ATP. The segment at serine 30–valine 59 is NMP. Residues threonine 31, arginine 36, glycine 57–valine 59, glycine 85–arginine 88, and glutamine 92 each bind AMP. The interval glycine 122–aspartate 159 is LID. Residues arginine 123 and valine 132 to tyrosine 133 each bind ATP. 2 residues coordinate AMP: arginine 156 and arginine 167. ATP is bound at residue glycine 201.

This sequence belongs to the adenylate kinase family. Monomer.

Its subcellular location is the cytoplasm. The catalysed reaction is AMP + ATP = 2 ADP. Its pathway is purine metabolism; AMP biosynthesis via salvage pathway; AMP from ADP: step 1/1. Functionally, catalyzes the reversible transfer of the terminal phosphate group between ATP and AMP. Plays an important role in cellular energy homeostasis and in adenine nucleotide metabolism. The protein is Adenylate kinase of Pseudomonas fluorescens (strain SBW25).